The chain runs to 187 residues: Ribosome maturation factor RimM (187 aa).

The 74-residue stretch at 96 to 169 folds into the PRC barrel domain; sequence EDEFFYADLE…KLVIDPTAAG (74 aa).

This sequence belongs to the RimM family. As to quaternary structure, binds ribosomal protein uS19.

Its subcellular location is the cytoplasm. An accessory protein needed during the final step in the assembly of 30S ribosomal subunit, possibly for assembly of the head region. Essential for efficient processing of 16S rRNA. May be needed both before and after RbfA during the maturation of 16S rRNA. It has affinity for free ribosomal 30S subunits but not for 70S ribosomes. This is Ribosome maturation factor RimM from Sinorhizobium medicae (strain WSM419) (Ensifer medicae).